Here is a 426-residue protein sequence, read N- to C-terminus: Putative F-box/LRR-repeat protein At4g15060 (426 aa).

One can recognise an F-box domain in the interval 25–71 (MDKISRLPDDLLVKVLLFLPTKIAVSTSILSKRWEFLWMWLPKLEYH). LRR repeat units lie at residues 50–75 (STSI…NTNY), 80–106 (EQRL…RLKF), 160–187 (ILKL…LLKR), 188–213 (VTYK…VVER), 221–259 (TLSI…KLTD), 265–290 (ETEL…HIDS), 311–337 (CVKV…KLCP), 338–363 (CDSN…EIKL), and 373–399 (DPAC…TWTW).

The chain is Putative F-box/LRR-repeat protein At4g15060 from Arabidopsis thaliana (Mouse-ear cress).